A 201-amino-acid polypeptide reads, in one-letter code: Ribonuclease HII (201 aa).

An RNase H type-2 domain is found at 10–200 (LIEAGCDEAG…LGDGQLELFS (191 aa)). Positions 16, 17, and 108 each coordinate a divalent metal cation.

The protein belongs to the RNase HII family. Requires Mn(2+) as cofactor. Mg(2+) serves as cofactor.

Its subcellular location is the cytoplasm. The enzyme catalyses Endonucleolytic cleavage to 5'-phosphomonoester.. Functionally, endonuclease that specifically degrades the RNA of RNA-DNA hybrids. This Bacteroides fragilis (strain ATCC 25285 / DSM 2151 / CCUG 4856 / JCM 11019 / LMG 10263 / NCTC 9343 / Onslow / VPI 2553 / EN-2) protein is Ribonuclease HII.